The sequence spans 340 residues: Ribosomal RNA large subunit methyltransferase F (340 aa).

It belongs to the methyltransferase superfamily. METTL16/RlmF family.

The protein resides in the cytoplasm. The catalysed reaction is adenosine(1618) in 23S rRNA + S-adenosyl-L-methionine = N(6)-methyladenosine(1618) in 23S rRNA + S-adenosyl-L-homocysteine + H(+). In terms of biological role, specifically methylates the adenine in position 1618 of 23S rRNA. The polypeptide is Ribosomal RNA large subunit methyltransferase F (Dechloromonas aromatica (strain RCB)).